A 231-amino-acid chain; its full sequence is ADP-ribose pyrophosphatase (231 aa).

N-acetylserine is present on Phe2. Substrate-binding positions include Trp46, Trp64–Asp65, Arg69, and Arg103. A Nudix hydrolase domain is found at Gly75–Arg214. A Mg(2+)-binding site is contributed by Ala115. Residues Gly116 to Gly137 carry the Nudix box motif. A substrate-binding site is contributed by Leu117. Residues Glu131 and Glu135 each contribute to the Mg(2+) site. Asp152 is a binding site for substrate. Residue Glu185 participates in Mg(2+) binding.

It belongs to the Nudix hydrolase family. NudF subfamily. It depends on Mg(2+) as a cofactor. Mn(2+) is required as a cofactor.

The catalysed reaction is ADP-D-ribose + H2O = D-ribose 5-phosphate + AMP + 2 H(+). This chain is ADP-ribose pyrophosphatase (YSA1), found in Saccharomyces cerevisiae (strain ATCC 204508 / S288c) (Baker's yeast).